The primary structure comprises 524 residues: Solute carrier family 2, facilitated glucose transporter member 2 (524 aa).

The Cytoplasmic segment spans residues 1-6 (MTEDKI). The chain crosses the membrane as a helical span at residues 7 to 26 (TGTLVFAVLTAVLGSFQFGY). Topologically, residues 27–89 (DIGVINAPQQ…SWAEEETTAS (63 aa)) are extracellular. The N-linked (GlcNAc...) asparagine glycan is linked to Asn-62. The chain crosses the membrane as a helical span at residues 90–115 (ASLIIMLWSLSVSIFAIGGMIASFFG). Residues 116 to 126 (GMLGDRLGRIK) lie on the Cytoplasmic side of the membrane. A helical membrane pass occupies residues 127 to 145 (AMLVANILSLVGALLMWFS). The Extracellular portion of the chain corresponds to 146–150 (KLGPS). Residues 151-176 (HILIISGRGISGLYCGLISGLVPMYI) form a helical membrane-spanning segment. Residues 177-187 (GEIAPTKFRGA) are Cytoplasmic-facing. The helical transmembrane segment at 188 to 211 (IGALHQLAIVTGILVSQIIGLDFL) threads the bilayer. Gln-193 is a D-glucose binding site. At 212-216 (LGNHE) the chain is on the extracellular side. The chain crosses the membrane as a helical span at residues 217–239 (LWHILLGLSAVPAVLQSLMLFFC). Topologically, residues 240 to 303 (PESPRYLYIK…LFTNSSYRQP (64 aa)) are cytoplasmic. A helical transmembrane segment spans residues 304-327 (ILVALMLHMAQQFSGINGIFYYST). Residues 314–315 (QQ) and Asn-320 each bind D-glucose. Over 328-338 (SIFQTAGISQP) the chain is Extracellular. The helical transmembrane segment at 339–360 (VYATIGVGAINTIFTALSVFLV) threads the bilayer. Asn-349 is a D-glucose binding site. The Cytoplasmic portion of the chain corresponds to 361-366 (EKAGRR). A helical transmembrane segment spans residues 367 to 389 (SLFLIGMSGMFVCAIFMSVGLVL). The Extracellular segment spans residues 390 to 394 (LDKLP). A helical transmembrane segment spans residues 395 to 413 (WMSYVSMTAIFLFVSFFEI). Positions 412 and 420 each coordinate D-glucose. Residues 414 to 433 (GPGPIPWFMVAEFFSQGPRP) lie on the Cytoplasmic side of the membrane. Residues 434–458 (AALAMAAFSNWTCNFIIALCFQYIA) traverse the membrane as a helical segment. Over 459–463 (DFCGP) the chain is Extracellular. A helical transmembrane segment spans residues 464 to 482 (YVFFLFAGVVLVFTLFTFF). At 483 to 524 (KVPETKGKSFEEIAAEFQKKSGSAQSPKAAVEMEFLGATETV) the chain is on the cytoplasmic side. Position 523 is a phosphothreonine (Thr-523).

This sequence belongs to the major facilitator superfamily. Sugar transporter (TC 2.A.1.1) family. Glucose transporter subfamily. Post-translationally, N-glycosylated; required for stability and retention at the cell surface of pancreatic beta cells.

The protein resides in the cell membrane. The enzyme catalyses D-glucose(out) = D-glucose(in). It carries out the reaction D-fructose(out) = D-fructose(in). It catalyses the reaction L-dehydroascorbate(out) = L-dehydroascorbate(in). The catalysed reaction is D-galactose(in) = D-galactose(out). D-glucose and maltose competitively inhibit fructose transport. D-glucose, D-fructose and maltose inhibit deoxyglucose transport. In terms of biological role, facilitative hexose transporter that mediates the transport of glucose, fructose and galactose. Likely mediates the bidirectional transfer of glucose across the plasma membrane of hepatocytes and is responsible for uptake of glucose by the beta cells; may comprise part of the glucose-sensing mechanism of the beta cell. May also participate with the Na(+)/glucose cotransporter in the transcellular transport of glucose in the small intestine and kidney. Also able to mediate the transport of dehydroascorbate. This is Solute carrier family 2, facilitated glucose transporter member 2 from Sus scrofa (Pig).